Consider the following 74-residue polypeptide: DNA-directed RNA polymerase subunit omega (74 aa).

Belongs to the RNA polymerase subunit omega family. As to quaternary structure, the RNAP catalytic core consists of 2 alpha, 1 beta, 1 beta' and 1 omega subunit. When a sigma factor is associated with the core the holoenzyme is formed, which can initiate transcription.

The catalysed reaction is RNA(n) + a ribonucleoside 5'-triphosphate = RNA(n+1) + diphosphate. Its function is as follows. Promotes RNA polymerase assembly. Latches the N- and C-terminal regions of the beta' subunit thereby facilitating its interaction with the beta and alpha subunits. The polypeptide is DNA-directed RNA polymerase subunit omega (Solidesulfovibrio magneticus (strain ATCC 700980 / DSM 13731 / RS-1) (Desulfovibrio magneticus)).